The primary structure comprises 1233 residues: Insulin receptor substrate 1 (1233 aa).

S3 carries the post-translational modification Phosphoserine. The interval 3–133 is mediates interaction with PHIP; it reads SPPDTDGFSD…AGGGCGGSCS (131 aa). The PH domain occupies 12-115; that stretch reads DVRKVGYLRK…WYQALLQLHN (104 aa). A Phosphoserine; by CK2 modification is found at S99. The IRS-type PTB domain maps to 155-259; it reads FKEVWQVILK…EAMRAMSDEF (105 aa). Residues 257–425 form a disordered region; it reads DEFRPRSKSQ…SDGGFISSDE (169 aa). A compositionally biased stretch (low complexity) spans 264 to 276; sequence KSQSSSSCSNPIS. Phosphoserine; by RPS6KB1 is present on residues S265 and S302. S307 bears the Phosphoserine; by IKKB, MAPK8 and RPS6KB1 mark. Residues S318, S325, S340, and S343 each carry the phosphoserine modification. Residues 349–358 are compositionally biased toward basic residues; it reads THAHRHRGSS. Low complexity-rich tracts occupy residues 378-399 and 407-419; these read SPSA…GSTS and SSAS…SDGG. At S414 the chain carries Phosphoserine. Phosphothreonine occurs at positions 441 and 448. Position 460 is a phosphotyrosine; by INSR (Y460). Residues 460–463 carry the YXXM motif 1 motif; it reads YICM. The residue at position 522 (S522) is a Phosphoserine; by RPS6KB1. 2 short sequence motifs (YXXM motif) span residues 546–549 and 608–611; these read YTEM and YMPM. Residue Y608 is modified to Phosphotyrosine; by INSR. S612 carries the phosphoserine modification. At Y628 the chain carries Phosphotyrosine; by INSR. The YXXM motif 4 motif lies at 628–631; sequence YMPM. At S632 the chain carries Phosphoserine; by RPS6KB1 and ROCK2. The tract at residues 651-720 is disordered; that stretch reads QRVDPNGYMM…PPVESGGGKL (70 aa). Y658 carries the post-translational modification Phosphotyrosine. The YXXM motif 5 signature appears at 658-661; the sequence is YMMM. Low complexity predominate over residues 662 to 689; the sequence is SPSGSCSPDIGGGSSSSSSISAAPSGSS. The YXXM motif 6 motif lies at 727–730; that stretch reads YMNM. The tract at residues 766 to 985 is disordered; sequence FKHTQRPGEP…VPNSRGDYMT (220 aa). Residues 771 to 780 are compositionally biased toward basic and acidic residues; it reads RPGEPEEGAR. 2 stretches are compositionally biased toward low complexity: residues 785–794 and 801–810; these read RLSSSSGRLR and DSSSSTSSDS. Phosphoserine; by AMPK and SIK2 is present on S789. Residue S887 is modified to Phosphoserine. Phosphotyrosine; by INSR occurs at positions 891, 935, and 983. Residues 891–893 form a GRB2-binding region; it reads YVN. 3 consecutive short sequence motifs (YXXM motif) follow at residues 935–938, 983–986, and 1006–1009; these read YMNM, YMTM, and YADM. The tract at residues 1015–1137 is disordered; the sequence is AEKASLPRPT…GSEDVKRHSS (123 aa). Residues 1032 to 1042 show a composition bias toward low complexity; the sequence is STASSSASVTP. 2 stretches are compositionally biased toward polar residues: residues 1043 to 1052 and 1069 to 1081; these read QGATAEQATH and TRVN…NQSA. 2 positions are modified to phosphoserine: S1096 and S1097. The segment covering 1116-1129 has biased composition (gly residues); the sequence is AAVGGSGGGGGGGS. Phosphotyrosine; by INSR is present on Y1173. The tract at residues 1178 to 1233 is disordered; sequence LAKEHSQDCPSQQQSLPPPPPHQPLGSNEGNSPRRSSEDLSNYASISFQKQPEDRQ. K1180 participates in a covalent cross-link: Glycyl lysine isopeptide (Lys-Gly) (interchain with G-Cter in ubiquitin). The span at 1203 to 1227 shows a compositional bias: polar residues; the sequence is GSNEGNSPRRSSEDLSNYASISFQK. A Phosphotyrosine; by INSR modification is found at Y1220.

As to quaternary structure, interacts (via phosphorylated YXXM motifs) with PIK3R1. Interacts with ROCK1. Interacts with GRB2. Interacts with SOCS7. Interacts (via IRS-type PTB domain) with IGF1R and INSR (via the tyrosine-phosphorylated NPXY motif). Interacts with UBTF and PIK3CA. Interacts (via PH domain) with PHIP. Interacts with FER. Interacts with ALK. Interacts with EIF2AK2/PKR. Interacts with GKAP1. Interacts with DGKZ in the absence of insulin; insulin stimulation decreases this interaction. Found in a ternary complex with DGKZ and PIP5K1A in the absence of insulin stimulation. Interacts with SQSTM1; the interaction is disrupted by the presence of tensin TNS2. Interacts with NCK1 (via SH2 domain). Interacts with NCK2 (via SH3 domain). Interacts with SH2B1; this interaction enhances leptin-induced activation of the PI3-kinase pathway. Interacts with DVL2; this interaction promotes the Wnt/beta-catenin signaling pathway. Serine phosphorylation of IRS1 is a mechanism for insulin resistance. Ser-307 phosphorylation inhibits insulin action through disruption of IRS1 interaction with the insulin receptor. Phosphorylation of Tyr-891 is required for GRB2-binding. Phosphorylated by ALK. Phosphorylated at Ser-265, Ser-302, Ser-632 and Ser-1097 by RPS6KB1; phosphorylation induces accelerated degradation of IRS1. Phosphorylated on tyrosine residues in response to insulin. In skeletal muscles, dephosphorylated on Tyr-608 by TNS2 under anabolic conditions; dephosphorylation results in the proteasomal degradation of IRS1. Post-translationally, ubiquitinated by the Cul7-RING(FBXW8) complex in a mTOR-dependent manner, leading to its degradation: the Cul7-RING(FBXW8) complex recognizes and binds IRS1 previously phosphorylated by S6 kinase (RPS6KB1 or RPS6KB2). Ubiquitinated by TRAF4 through 'Lys-29' linkage; this ubiquitination regulates the interaction of IRS1 with IGFR and IRS1 tyrosine phosphorylation upon IGF1 stimulation. In terms of processing, S-nitrosylation at by BLVRB inhibits its activity. Expressed in osteoblasts, but not in osteoclasts.

The protein localises to the cytoplasm. Its subcellular location is the nucleus. Its function is as follows. Signaling adapter protein that participates in the signal transduction from two prominent receptor tyrosine kinases, insulin receptor/INSR and insulin-like growth factor I receptor/IGF1R. Plays therefore an important role in development, growth, glucose homeostasis as well as lipid metabolism. Upon phosphorylation by the insulin receptor, functions as a signaling scaffold that propagates insulin action through binding to SH2 domain-containing proteins including the p85 regulatory subunit of PI3K, NCK1, NCK2, GRB2 or SHP2. Recruitment of GRB2 leads to the activation of the guanine nucleotide exchange factor SOS1 which in turn triggers the Ras/Raf/MEK/MAPK signaling cascade. Activation of the PI3K/AKT pathway is responsible for most of insulin metabolic effects in the cell, and the Ras/Raf/MEK/MAPK is involved in the regulation of gene expression and in cooperation with the PI3K pathway regulates cell growth and differentiation. Acts a positive regulator of the Wnt/beta-catenin signaling pathway through suppression of DVL2 autophagy-mediated degradation leading to cell proliferation. The chain is Insulin receptor substrate 1 (Irs1) from Mus musculus (Mouse).